The primary structure comprises 397 residues: Guanine nucleotide-binding protein G(s) subunit alpha (397 aa).

Residues 1-23 (MGCLGNSKTEDQRNEEKAQREAN) are disordered. The N-palmitoyl glycine moiety is linked to residue Gly-2. Residue Cys-3 is the site of S-palmitoyl cysteine attachment. Positions 8–23 (KTEDQRNEEKAQREAN) are enriched in basic and acidic residues. Residues 39–397 (ATHRLLLLGA…RMHLRQYELL (359 aa)) form the G-alpha domain. A G1 motif region spans residues 42–55 (RLLLLGAGESGKST). Residues 47-55 (GAGESGKST), 182-189 (LLRCRVLT), 208-212 (DVGGQ), 277-280 (NKQD), and Ala-369 each bind GTP. Ser-54 and Thr-189 together coordinate Mg(2+). Residues 181 to 189 (DLLRCRVLT) form a G2 motif region. The interval 204-213 (FHMFDVGGQR) is G3 motif. The tract at residues 273–280 (ILFLNKQD) is G4 motif. Residues 367-372 (TCAVDT) are G5 motif.

Belongs to the G-alpha family. G(s) subfamily. In terms of assembly, heterotrimeric G proteins are composed of 3 units; alpha, beta and gamma. The alpha chain contains the guanine nucleotide binding site. Interacts with CRY1; the interaction may block GPCR-mediated regulation of cAMP concentrations. Interacts with ADCY6 and stimulates its adenylyl cyclase activity. Interacts with ADCY2 and ADCY5. Stimulates the ADCY5 adenylyl cyclase activity. Interaction with SASH1.

Its subcellular location is the cell membrane. Guanine nucleotide-binding proteins (G proteins) function as transducers in numerous signaling pathways controlled by G protein-coupled receptors (GPCRs). Signaling involves the activation of adenylyl cyclases, resulting in increased levels of the signaling molecule cAMP. GNAS functions downstream of several GPCRs, including beta-adrenergic receptors. Stimulates the Ras signaling pathway via RAPGEF2. This chain is Guanine nucleotide-binding protein G(s) subunit alpha (GNAS), found in Sus scrofa (Pig).